We begin with the raw amino-acid sequence, 86 residues long: Large ribosomal subunit protein bL27 (86 aa).

It belongs to the bacterial ribosomal protein bL27 family.

The protein is Large ribosomal subunit protein bL27 of Flavobacterium psychrophilum (strain ATCC 49511 / DSM 21280 / CIP 103535 / JIP02/86).